The following is a 611-amino-acid chain: Rho-related BTB domain-containing protein 3 (611 aa).

A rho-like region spans residues methionine 1–leucine 175. BTB domains are found at residues valine 254–glutamate 356 and alanine 420–glycine 487. The tract at residues alanine 420–methionine 611 is interaction with Rab9.

Interacts with RAB9A and RAB9B (at lower level compared to RAB9A-binding). Interacts with M6PRBP1/TIP47. Ubiquitous. Highly expressed in neural and cardiac tissues, pancreas, placenta and testis.

It is found in the golgi apparatus. Rab9-regulated ATPase required for endosome to Golgi transport. Involved in transport vesicle docking at the Golgi complex, possibly by participating in release M6PRBP1/TIP47 from vesicles to permit their efficient docking and fusion at the Golgi. Specifically binds Rab9, but not other Rab proteins. Has low intrinsic ATPase activity due to autoinhibition, which is relieved by Rab9. The protein is Rho-related BTB domain-containing protein 3 (RHOBTB3) of Homo sapiens (Human).